A 299-amino-acid polypeptide reads, in one-letter code: Oxygen-dependent coproporphyrinogen-III oxidase (299 aa).

A substrate-binding site is contributed by Ser92. Residues His96 and His106 each contribute to the a divalent metal cation site. Residue His106 is the Proton donor of the active site. 108-110 (NVR) lines the substrate pocket. Positions 145 and 175 each coordinate a divalent metal cation. Positions 240 to 275 (YVEFNLVWDRGTLFGLQTGGRTESILMSMPPLVRWE) are important for dimerization. 258–260 (GGR) contributes to the substrate binding site.

The protein belongs to the aerobic coproporphyrinogen-III oxidase family. In terms of assembly, homodimer. The cofactor is a divalent metal cation.

The protein localises to the cytoplasm. It carries out the reaction coproporphyrinogen III + O2 + 2 H(+) = protoporphyrinogen IX + 2 CO2 + 2 H2O. It participates in porphyrin-containing compound metabolism; protoporphyrin-IX biosynthesis; protoporphyrinogen-IX from coproporphyrinogen-III (O2 route): step 1/1. In terms of biological role, involved in the heme biosynthesis. Catalyzes the aerobic oxidative decarboxylation of propionate groups of rings A and B of coproporphyrinogen-III to yield the vinyl groups in protoporphyrinogen-IX. This is Oxygen-dependent coproporphyrinogen-III oxidase from Citrobacter koseri (strain ATCC BAA-895 / CDC 4225-83 / SGSC4696).